A 207-amino-acid chain; its full sequence is Outer-membrane lipoprotein LolB (207 aa).

An N-terminal signal peptide occupies residues 1–21; the sequence is MTLPDFRLIRLLPLASLVLTA. Cys-22 carries the N-palmitoyl cysteine lipid modification. Cys-22 carries S-diacylglycerol cysteine lipidation.

It belongs to the LolB family. In terms of assembly, monomer.

Its subcellular location is the cell outer membrane. Its function is as follows. Plays a critical role in the incorporation of lipoproteins in the outer membrane after they are released by the LolA protein. The protein is Outer-membrane lipoprotein LolB of Salmonella schwarzengrund (strain CVM19633).